A 299-amino-acid polypeptide reads, in one-letter code: Tetrahydromethanopterin S-methyltransferase subunit E (299 aa).

6 consecutive transmembrane segments (helical) span residues 57–79, 89–111, 132–154, 164–183, 227–246, and 261–283; these read AISG…AWAL, AIIV…AFLG, HIGP…AYLA, LPLV…SSTG, FCSR…IIFL, and LVTK…AVIN.

It belongs to the MtrE family. The complex is composed of 8 subunits; MtrA, MtrB, MtrC, MtrD, MtrE, MtrF, MtrG and MtrH.

It localises to the cell membrane. It catalyses the reaction 5-methyl-5,6,7,8-tetrahydromethanopterin + coenzyme M + 2 Na(+)(in) = 5,6,7,8-tetrahydromethanopterin + methyl-coenzyme M + 2 Na(+)(out). It functions in the pathway one-carbon metabolism; methanogenesis from CO(2); methyl-coenzyme M from 5,10-methylene-5,6,7,8-tetrahydromethanopterin: step 2/2. Its function is as follows. Part of a complex that catalyzes the formation of methyl-coenzyme M and tetrahydromethanopterin from coenzyme M and methyl-tetrahydromethanopterin. This is an energy-conserving, sodium-ion translocating step. This Methanococcus maripaludis (strain DSM 14266 / JCM 13030 / NBRC 101832 / S2 / LL) protein is Tetrahydromethanopterin S-methyltransferase subunit E.